We begin with the raw amino-acid sequence, 333 residues long: D-fructose 1,6-bisphosphatase class 2/sedoheptulose 1,7-bisphosphatase (333 aa).

Residues D33, E57, D85, and E88 each contribute to the Mn(2+) site. Residues 88-90, Y119, 164-166, and 186-188 contribute to the substrate site; these read EGT, RTR, and DGD. E213 lines the Mn(2+) pocket.

This sequence belongs to the FBPase class 2 family. In terms of assembly, homotetramer. Mn(2+) serves as cofactor.

It carries out the reaction beta-D-fructose 1,6-bisphosphate + H2O = beta-D-fructose 6-phosphate + phosphate. It catalyses the reaction D-sedoheptulose 1,7-bisphosphate + H2O = D-sedoheptulose 7-phosphate + phosphate. It participates in carbohydrate biosynthesis; Calvin cycle. Catalyzes the hydrolysis of fructose 1,6-bisphosphate (Fru 1,6-P2) and sedoheptulose 1,7-bisphosphate (Sed 1,7-P2) to fructose 6-phosphate and sedoheptulose 7-phosphate, respectively. The chain is D-fructose 1,6-bisphosphatase class 2/sedoheptulose 1,7-bisphosphatase from Prochlorococcus marinus (strain MIT 9312).